A 420-amino-acid polypeptide reads, in one-letter code: Heterogeneous nuclear ribonucleoprotein D-like (420 aa).

Disordered regions lie at residues 1–83 (MEVP…RRRP) and 96–120 (QRSA…SVTM). Position 25 is an omega-N-methylarginine (Arg25). Residues 36 to 52 (RQLAPLLPSLAPSSARQ) show a composition bias toward low complexity. RRM domains lie at 148–230 (GKMF…KGKE) and 233–312 (KKVF…QPKE). Position 161 is an N6-methyllysine (Lys161). A Glycyl lysine isopeptide (Lys-Gly) (interchain with G-Cter in SUMO2) cross-link involves residue Lys209. The residue at position 216 (Lys216) is an N6-acetyllysine. Ser241 bears the Phosphoserine mark. 2 disordered regions span residues 313–348 (VYRQ…NWNQ) and 398–420 (GQQS…YQPY). Residues 323-342 (GGRGAAAGGRGGTRGRGRGQ) are compositionally biased toward gly residues. Positions 342 to 420 (QGQNWNQGFN…GNHQNNYQPY (79 aa)) are necessary for interaction with TNPO1. The necessary for its nuclear import and export stretch occupies residues 396 to 420 (YSGQQSTYGKASRGGGNHQNNYQPY). Dimethylated arginine; alternate is present on Arg408. Arg408 carries the omega-N-methylarginine; alternate modification.

In terms of assembly, interacts with ZNF148. Interacts with TNPO1. Post-translationally, dimethylation of Arg-408 is probably of the asymmetric type. Expressed in heart, brain, placenta, lung, liver, skeletal muscle, kidney, pancreas, spleen, thymus, prostate, testis, ovary, small intestine, colon and leukocytes. Expressed in myeloid leukemia, gastric adenocarcinoma, cervical carcinoma, hepatoma, fibrosarcoma, colon adenocarcinoma, epidermoid carcinoma, osteosarcoma and urinary bladder carcinoma cells.

It localises to the nucleus. The protein resides in the cytoplasm. Functionally, acts as a transcriptional regulator. Promotes transcription repression. Promotes transcription activation in differentiated myotubes. Binds to double- and single-stranded DNA sequences. Binds to the transcription suppressor CATR sequence of the COX5B promoter. Binds with high affinity to RNA molecules that contain AU-rich elements (AREs) found within the 3'-UTR of many proto-oncogenes and cytokine mRNAs. Binds both to nuclear and cytoplasmic poly(A) mRNAs. Binds to poly(G) and poly(A), but not to poly(U) or poly(C) RNA homopolymers. Binds to the 5'-ACUAGC-3' RNA consensus sequence. The protein is Heterogeneous nuclear ribonucleoprotein D-like (HNRNPDL) of Homo sapiens (Human).